Here is a 65-residue protein sequence, read N- to C-terminus: Small, acid-soluble spore protein Tlp (65 aa).

This sequence belongs to the Tlp family.

It is found in the spore core. The polypeptide is Small, acid-soluble spore protein Tlp (Bacillus cereus (strain B4264)).